We begin with the raw amino-acid sequence, 291 residues long: 33 kDa chaperonin (291 aa).

Cystine bridges form between cysteine 237–cysteine 239 and cysteine 270–cysteine 273.

The protein belongs to the HSP33 family. Post-translationally, under oxidizing conditions two disulfide bonds are formed involving the reactive cysteines. Under reducing conditions zinc is bound to the reactive cysteines and the protein is inactive.

The protein localises to the cytoplasm. Its function is as follows. Redox regulated molecular chaperone. Protects both thermally unfolding and oxidatively damaged proteins from irreversible aggregation. Plays an important role in the bacterial defense system toward oxidative stress. The polypeptide is 33 kDa chaperonin (Clostridioides difficile (strain 630) (Peptoclostridium difficile)).